Reading from the N-terminus, the 341-residue chain is Anthranilate phosphoribosyltransferase (341 aa).

5-phospho-alpha-D-ribose 1-diphosphate contacts are provided by residues Gly-79, 82 to 83, Thr-87, 89 to 92, 107 to 115, and Ser-119; these read GD, NIST, and KHGNRAVSS. Anthranilate is bound at residue Gly-79. Ser-91 serves as a coordination point for Mg(2+). Asn-110 is an anthranilate binding site. Arg-165 serves as a coordination point for anthranilate. Asp-224 and Glu-225 together coordinate Mg(2+).

The protein belongs to the anthranilate phosphoribosyltransferase family. Homodimer. The cofactor is Mg(2+).

The catalysed reaction is N-(5-phospho-beta-D-ribosyl)anthranilate + diphosphate = 5-phospho-alpha-D-ribose 1-diphosphate + anthranilate. The protein operates within amino-acid biosynthesis; L-tryptophan biosynthesis; L-tryptophan from chorismate: step 2/5. Its function is as follows. Catalyzes the transfer of the phosphoribosyl group of 5-phosphorylribose-1-pyrophosphate (PRPP) to anthranilate to yield N-(5'-phosphoribosyl)-anthranilate (PRA). The protein is Anthranilate phosphoribosyltransferase of Bacillus cereus (strain B4264).